Here is a 182-residue protein sequence, read N- to C-terminus: ATP synthase subunit delta (182 aa).

The protein belongs to the ATPase delta chain family. As to quaternary structure, F-type ATPases have 2 components, F(1) - the catalytic core - and F(0) - the membrane proton channel. F(1) has five subunits: alpha(3), beta(3), gamma(1), delta(1), epsilon(1). F(0) has three main subunits: a(1), b(2) and c(10-14). The alpha and beta chains form an alternating ring which encloses part of the gamma chain. F(1) is attached to F(0) by a central stalk formed by the gamma and epsilon chains, while a peripheral stalk is formed by the delta and b chains.

The protein resides in the cell membrane. Functionally, f(1)F(0) ATP synthase produces ATP from ADP in the presence of a proton or sodium gradient. F-type ATPases consist of two structural domains, F(1) containing the extramembraneous catalytic core and F(0) containing the membrane proton channel, linked together by a central stalk and a peripheral stalk. During catalysis, ATP synthesis in the catalytic domain of F(1) is coupled via a rotary mechanism of the central stalk subunits to proton translocation. In terms of biological role, this protein is part of the stalk that links CF(0) to CF(1). It either transmits conformational changes from CF(0) to CF(1) or is implicated in proton conduction. The chain is ATP synthase subunit delta from Syntrophomonas wolfei subsp. wolfei (strain DSM 2245B / Goettingen).